Consider the following 132-residue polypeptide: Guanyl-specific ribonuclease C2 (132 aa).

A signal peptide spans 1–26; sequence MLYNKLITIAALLVPALAAPQGLDVR. Intrachain disulfides connect C28–C36 and C32–C129. The active site involves H66. E84 acts as the Proton acceptor in catalysis. The Proton donor role is filled by H118.

It belongs to the ribonuclease N1/T1 family.

Its subcellular location is the secreted. The enzyme catalyses [RNA] containing guanosine + H2O = an [RNA fragment]-3'-guanosine-3'-phosphate + a 5'-hydroxy-ribonucleotide-3'-[RNA fragment].. The chain is Guanyl-specific ribonuclease C2 from Aspergillus clavatus (strain ATCC 1007 / CBS 513.65 / DSM 816 / NCTC 3887 / NRRL 1 / QM 1276 / 107).